Here is a 340-residue protein sequence, read N- to C-terminus: Ferredoxin--NADP reductase (340 aa).

Positions 33, 41, 46, 86, 120, 286, and 327 each coordinate FAD.

Belongs to the ferredoxin--NADP reductase type 2 family. As to quaternary structure, homodimer. FAD serves as cofactor.

It catalyses the reaction 2 reduced [2Fe-2S]-[ferredoxin] + NADP(+) + H(+) = 2 oxidized [2Fe-2S]-[ferredoxin] + NADPH. This is Ferredoxin--NADP reductase from Rickettsia conorii (strain ATCC VR-613 / Malish 7).